The primary structure comprises 389 residues: Type III polyketide synthase 21 (389 aa).

The active-site Nucleophile is the cysteine 170.

This sequence belongs to the thiolase-like superfamily. Chalcone/stilbene synthases family. In terms of tissue distribution, expressed in anthers. Expressed in young and adult flowers.

Functionally, plant type III polyketide synthases (PKSs) that catalyzes the condensation of fatty acyl-CoA with malonyl-CoA to generate triketide and tetraketide alpha-pyrones, the main components of pollen exine and potential sporopollenin precursors. The chain is Type III polyketide synthase 21 (PKS21) from Oryza sativa subsp. japonica (Rice).